Here is a 74-residue protein sequence, read N- to C-terminus: UPF0435 protein GTNG_0390 (74 aa).

It belongs to the UPF0435 family.

This is UPF0435 protein GTNG_0390 from Geobacillus thermodenitrificans (strain NG80-2).